Consider the following 74-residue polypeptide: Anionic peptide clone 8 (74 aa).

Residues 1 to 24 form the signal peptide; it reads MVSKSLIVLLLVSVLVSTFFTTEA.

This sequence belongs to the non-disulfide-bridged peptide (NDBP) superfamily. Long chain multifunctional peptide (group 2) family. Expressed by the venom gland.

It is found in the secreted. Its function is as follows. May be an antimicrobial peptide. This Tityus costatus (Brazilian scorpion) protein is Anionic peptide clone 8.